The sequence spans 488 residues: Putative BTB/POZ domain-containing protein L674 (488 aa).

Residues 83-150 enclose the BTB domain; that stretch reads NIVYFNIGGK…VKNQKCPINN (68 aa).

It belongs to the mimivirus BTB/WD family.

This is Putative BTB/POZ domain-containing protein L674 from Acanthamoeba polyphaga (Amoeba).